We begin with the raw amino-acid sequence, 527 residues long: UDP-glucuronosyltransferase 2A1 (527 aa).

Positions 1–20 (MLNNLLLFSLQISLIGTTLG) are cleaved as a signal peptide. The Lumenal portion of the chain corresponds to 21 to 491 (GNVLIWPMEG…TWFQYHSLDV (471 aa)). N-linked (GlcNAc...) asparagine glycans are attached at residues asparagine 49, leucine 313, and asparagine 347. The helical transmembrane segment at 492–512 (IGFLLVCVTTAIFLVIQCCLF) threads the bilayer. Over 513–527 (SCQKFGKIGKKKKRE) the chain is Cytoplasmic.

The protein belongs to the UDP-glycosyltransferase family. As to expression, olfactory epithelium, brain and fetal lung. Not present in liver.

The protein resides in the membrane. It is found in the endoplasmic reticulum membrane. It catalyses the reaction glucuronate acceptor + UDP-alpha-D-glucuronate = acceptor beta-D-glucuronoside + UDP + H(+). It carries out the reaction 16beta,17beta-estriol + UDP-alpha-D-glucuronate = 16beta,17beta-estriol 16-O-(beta-D-glucuronate) + UDP + H(+). The catalysed reaction is 16alpha,17alpha-estriol + UDP-alpha-D-glucuronate = 16alpha,17alpha-estriol 16-O-(beta-D-glucuronate) + UDP + H(+). The enzyme catalyses 17alpha-estradiol + UDP-alpha-D-glucuronate = 17alpha-estradiol 17-O-(beta-D-glucuronate) + UDP + H(+). It catalyses the reaction 17alpha-estradiol + UDP-alpha-D-glucuronate = 17alpha-estradiol 3-O-(beta-D-glucuronate) + UDP + H(+). It carries out the reaction 17beta-estradiol + UDP-alpha-D-glucuronate = 17beta-estradiol 3-O-(beta-D-glucuronate) + UDP + H(+). The catalysed reaction is 17beta-estradiol + UDP-alpha-D-glucuronate = 17beta-estradiol 17-O-(beta-D-glucuronate) + UDP + H(+). The enzyme catalyses testosterone + UDP-alpha-D-glucuronate = testosterone 17-O-(beta-D-glucuronate) + UDP + H(+). It catalyses the reaction epitestosterone + UDP-alpha-D-glucuronate = epitestosterone 17-O-(beta-D-glucuronate) + UDP + H(+). It carries out the reaction lithocholate + UDP-alpha-D-glucuronate = lithocholoyl-3-O-(beta-D-glucuronate) + UDP + H(+). The catalysed reaction is lithocholate + UDP-alpha-D-glucuronate = lithocholoyl-24-O-(beta-D-glucuronate) + UDP. The enzyme catalyses deoxycholate + UDP-alpha-D-glucuronate = deoxycholoyl-24-O-(beta-D-glucuronate) + UDP. It catalyses the reaction hyodeoxycholate + UDP-alpha-D-glucuronate = hyodeoxycholoyl-24-O-(beta-D-glucuronate) + UDP. It carries out the reaction hyocholate + UDP-alpha-D-glucuronate = hyocholoyl-24-O-(beta-D-glucuronate) + UDP. Its function is as follows. UDP-glucuronosyltransferase (UGT) that catalyzes phase II biotransformation reactions in which lipophilic substrates are conjugated with glucuronic acid to increase the metabolite's water solubility, thereby facilitating excretion into either the urine or bile. Essential for the elimination and detoxification of drugs, xenobiotics and endogenous compounds. Catalyzes the glucuronidation of endogenous steroid hormones such as androgens (testosterone and epitestosterone) and estrogens (estradiol and epiestriol). Contributes to bile acid (BA) detoxification by catalyzing the glucuronidation of BA substrates, which are natural detergents for dietary lipids absorption. Shows a high affinity to aliphatic odorants such as citronellol as well as olfactory tissue specificity, and therefore may be involved in olfaction. Shows a potential role in detoxification of toxic waste compounds in the amniotic fluid before birth, and air-born chemical after birth. The protein is UDP-glucuronosyltransferase 2A1 of Homo sapiens (Human).